The following is a 343-amino-acid chain: Ferredoxin--NADP reductase (343 aa).

FAD is bound by residues aspartate 31, lysine 39, tyrosine 43, valine 83, isoleucine 118, aspartate 285, and serine 326.

It belongs to the ferredoxin--NADP reductase type 2 family. Homodimer. FAD serves as cofactor.

The catalysed reaction is 2 reduced [2Fe-2S]-[ferredoxin] + NADP(+) + H(+) = 2 oxidized [2Fe-2S]-[ferredoxin] + NADPH. The sequence is that of Ferredoxin--NADP reductase from Staphylococcus saprophyticus subsp. saprophyticus (strain ATCC 15305 / DSM 20229 / NCIMB 8711 / NCTC 7292 / S-41).